A 357-amino-acid chain; its full sequence is 4-hydroxy-3-methylbut-2-en-1-yl diphosphate synthase (flavodoxin) (357 aa).

The [4Fe-4S] cluster site is built by C264, C267, C299, and E306.

Belongs to the IspG family. [4Fe-4S] cluster is required as a cofactor.

The catalysed reaction is (2E)-4-hydroxy-3-methylbut-2-enyl diphosphate + oxidized [flavodoxin] + H2O + 2 H(+) = 2-C-methyl-D-erythritol 2,4-cyclic diphosphate + reduced [flavodoxin]. Its pathway is isoprenoid biosynthesis; isopentenyl diphosphate biosynthesis via DXP pathway; isopentenyl diphosphate from 1-deoxy-D-xylulose 5-phosphate: step 5/6. Functionally, converts 2C-methyl-D-erythritol 2,4-cyclodiphosphate (ME-2,4cPP) into 1-hydroxy-2-methyl-2-(E)-butenyl 4-diphosphate. The sequence is that of 4-hydroxy-3-methylbut-2-en-1-yl diphosphate synthase (flavodoxin) from Campylobacter jejuni subsp. jejuni serotype O:23/36 (strain 81-176).